A 346-amino-acid polypeptide reads, in one-letter code: tRNA N6-adenosine threonylcarbamoyltransferase (346 aa).

Fe cation contacts are provided by His-117 and His-121. Residues 139–143, Asp-172, Gly-185, Asp-189, and Asn-278 contribute to the substrate site; that span reads QVSGG. Asp-308 is a binding site for Fe cation.

This sequence belongs to the KAE1 / TsaD family. It depends on Fe(2+) as a cofactor.

The protein localises to the cytoplasm. The catalysed reaction is L-threonylcarbamoyladenylate + adenosine(37) in tRNA = N(6)-L-threonylcarbamoyladenosine(37) in tRNA + AMP + H(+). Required for the formation of a threonylcarbamoyl group on adenosine at position 37 (t(6)A37) in tRNAs that read codons beginning with adenine. Is involved in the transfer of the threonylcarbamoyl moiety of threonylcarbamoyl-AMP (TC-AMP) to the N6 group of A37, together with TsaE and TsaB. TsaD likely plays a direct catalytic role in this reaction. The polypeptide is tRNA N6-adenosine threonylcarbamoyltransferase (Lactobacillus delbrueckii subsp. bulgaricus (strain ATCC 11842 / DSM 20081 / BCRC 10696 / JCM 1002 / NBRC 13953 / NCIMB 11778 / NCTC 12712 / WDCM 00102 / Lb 14)).